Reading from the N-terminus, the 188-residue chain is Ribosomal RNA small subunit methyltransferase G (188 aa).

Residues glycine 69, phenylalanine 74, 119–120, and arginine 134 contribute to the S-adenosyl-L-methionine site; that span reads VQ.

The protein belongs to the methyltransferase superfamily. RNA methyltransferase RsmG family.

It localises to the cytoplasm. It catalyses the reaction guanosine(527) in 16S rRNA + S-adenosyl-L-methionine = N(7)-methylguanosine(527) in 16S rRNA + S-adenosyl-L-homocysteine. Functionally, specifically methylates the N7 position of guanine in position 527 of 16S rRNA. This chain is Ribosomal RNA small subunit methyltransferase G, found in Campylobacter jejuni (strain RM1221).